A 209-amino-acid chain; its full sequence is uncharacterized protein (209 aa).

Residues 41–76 (NVENLCLIRNKLKTDIENLLENKIDVENKLLVLRNQ) are a coiled coil.

This is an uncharacterized protein from Acanthamoeba polyphaga (Amoeba).